The primary structure comprises 386 residues: Acetate kinase (386 aa).

Residue asparagine 9 participates in Mg(2+) binding. Residue lysine 16 participates in ATP binding. A substrate-binding site is contributed by arginine 74. Residue aspartate 131 is the Proton donor/acceptor of the active site. Residues 191 to 195, 265 to 267, and 313 to 317 each bind ATP; these read HLGNG, DFR, and GVGEN. Glutamate 367 is a binding site for Mg(2+).

It belongs to the acetokinase family. Homodimer. Mg(2+) serves as cofactor. Mn(2+) is required as a cofactor.

The protein resides in the cytoplasm. The catalysed reaction is acetate + ATP = acetyl phosphate + ADP. Its pathway is metabolic intermediate biosynthesis; acetyl-CoA biosynthesis; acetyl-CoA from acetate: step 1/2. Functionally, catalyzes the formation of acetyl phosphate from acetate and ATP. Can also catalyze the reverse reaction. In Mycolicibacterium gilvum (strain PYR-GCK) (Mycobacterium gilvum (strain PYR-GCK)), this protein is Acetate kinase.